Reading from the N-terminus, the 327-residue chain is Glycoprotein integral membrane protein 1 (327 aa).

A signal peptide spans 1-23; that stretch reads MEGGLSAPLSVRLLLFIALPAAG. Topologically, residues 24–259 are extracellular; sequence WLTTNAPRPP…LCRFWSSVVP (236 aa). N-linked (GlcNAc...) asparagine glycans are attached at residues asparagine 44, asparagine 62, and asparagine 146. The chain crosses the membrane as a helical span at residues 260–280; sequence VLFMFLDVMVVGVLGAAGVIA. The Cytoplasmic segment spans residues 281-327; it reads VLKLLFPVCENKGILQVDKMNGISVPIILYPDGSEKTAQKLTDKTDI.

It is found in the membrane. The chain is Glycoprotein integral membrane protein 1 (Ginm1) from Mus musculus (Mouse).